The sequence spans 502 residues: Lysine--tRNA ligase (502 aa).

Mg(2+) contacts are provided by E413 and E420.

It belongs to the class-II aminoacyl-tRNA synthetase family. In terms of assembly, homodimer. Requires Mg(2+) as cofactor.

The protein localises to the cytoplasm. It carries out the reaction tRNA(Lys) + L-lysine + ATP = L-lysyl-tRNA(Lys) + AMP + diphosphate. This is Lysine--tRNA ligase from Aromatoleum aromaticum (strain DSM 19018 / LMG 30748 / EbN1) (Azoarcus sp. (strain EbN1)).